A 573-amino-acid chain; its full sequence is Proline--tRNA ligase (573 aa).

Belongs to the class-II aminoacyl-tRNA synthetase family. ProS type 1 subfamily. As to quaternary structure, homodimer.

The protein localises to the cytoplasm. The enzyme catalyses tRNA(Pro) + L-proline + ATP = L-prolyl-tRNA(Pro) + AMP + diphosphate. In terms of biological role, catalyzes the attachment of proline to tRNA(Pro) in a two-step reaction: proline is first activated by ATP to form Pro-AMP and then transferred to the acceptor end of tRNA(Pro). As ProRS can inadvertently accommodate and process non-cognate amino acids such as alanine and cysteine, to avoid such errors it has two additional distinct editing activities against alanine. One activity is designated as 'pretransfer' editing and involves the tRNA(Pro)-independent hydrolysis of activated Ala-AMP. The other activity is designated 'posttransfer' editing and involves deacylation of mischarged Ala-tRNA(Pro). The misacylated Cys-tRNA(Pro) is not edited by ProRS. This chain is Proline--tRNA ligase, found in Elusimicrobium minutum (strain Pei191).